The primary structure comprises 227 residues: UPF0173 metal-dependent hydrolase BCG9842_B0515 (227 aa).

Belongs to the UPF0173 family.

The chain is UPF0173 metal-dependent hydrolase BCG9842_B0515 from Bacillus cereus (strain G9842).